We begin with the raw amino-acid sequence, 246 residues long: Large ribosomal subunit protein uL30-like 1 (246 aa).

Phosphoserine is present on Ser54.

This sequence belongs to the universal ribosomal protein uL30 family.

This chain is Large ribosomal subunit protein uL30-like 1 (Rpl7l1), found in Mus musculus (Mouse).